Here is a 61-residue protein sequence, read N- to C-terminus: Large ribosomal subunit protein bL28 (61 aa).

A disordered region spans residues 1–26 (MAKDFVTGKHTRFGNTRSHALNHSRR).

The protein belongs to the bacterial ribosomal protein bL28 family.

The sequence is that of Large ribosomal subunit protein bL28 from Pediococcus pentosaceus (strain ATCC 25745 / CCUG 21536 / LMG 10740 / 183-1w).